A 599-amino-acid polypeptide reads, in one-letter code: MFRAQQNAFDDAVAKATDENLTSENWEYILDVCDKVAAEESGAKDAVAAMIKRLAHRNANVQLYTLELANALAQNCGPKIHRELASRSFTDALLRLANDRNTHQQVKSKILERMHDWTRMFSSNPDFGIMEQAYMKLKTQNPNLQPPSKPVKKEITQADRQKEEEELQMALALSIREKSDAGPAPQAESSAPASAPVSQTQAAAPQAVPSGTSAATVSRVRALFDFQPSEPGELQFRKGDIIAVLESVYKDWWKGSLRGQTGIFPLNYVEKLPDPTVEELQREAQMEADVFGQIKNVEKLLTLLSTRSSELNVQDNEEITALYHSTLAIRPKLIELIGKYSQKKDEFTQLNEKFIKARRDYESLLEASMSHPPQPQYARPGQPPYGYPAPTGPHGYPQGAPQPDPQRYFSPRPQDQTHMYPPTSQSPDPRGRTPPAGPTMQQQQQQPPAESFQPMHHRPESTYDNPQELGTSVYDSPVEYPPANQRFQYPPGASAPPGVHQQLQQQQQEYSPSNYSPEDTTNPPTANFPPQPQQSQLPYPTGPAGHQAPPSHQPPPVPGGASKPSPYPSLTPGAPSAGEYQAYNPSQASASSNPASFYR.

The VHS domain occupies 16-145 (ATDENLTSEN…KLKTQNPNLQ (130 aa)). Disordered regions lie at residues 140–163 (QNPN…RQKE) and 177–212 (EKSD…PSGT). Basic and acidic residues predominate over residues 151 to 163 (VKKEITQADRQKE). A UIM domain is found at 162 to 181 (KEEEELQMALALSIREKSDA). Low complexity predominate over residues 181–210 (AGPAPQAESSAPASAPVSQTQAAAPQAVPS). An SH3 domain is found at 215–274 (ATVSRVRALFDFQPSEPGELQFRKGDIIAVLESVYKDWWKGSLRGQTGIFPLNYVEKLPD). Residues 368-599 (SMSHPPQPQY…ASSNPASFYR (232 aa)) form a disordered region. A compositionally biased stretch (pro residues) spans 381–391 (GQPPYGYPAPT). Residues 413–427 (PQDQTHMYPPTSQSP) show a composition bias toward polar residues. Positions 438 to 454 (PTMQQQQQQPPAESFQP) are enriched in low complexity. Polar residues-rich tracts occupy residues 462-474 (TYDN…TSVY) and 509-525 (EYSP…NPPT). Composition is skewed to low complexity over residues 533–550 (QQSQ…QAPP) and 580–599 (YQAY…SFYR).

Belongs to the STAM family. As to quaternary structure, component of the ESCRT-0 complex composed of HSE1 and VPS27.

The protein localises to the endosome membrane. Its function is as follows. Component of the ESCRT-0 complex which is the sorting receptor for ubiquitinated cargo proteins at the multivesicular body (MVB). The polypeptide is Class E vacuolar protein-sorting machinery protein hse1 (hse1) (Aspergillus clavatus (strain ATCC 1007 / CBS 513.65 / DSM 816 / NCTC 3887 / NRRL 1 / QM 1276 / 107)).